We begin with the raw amino-acid sequence, 287 residues long: Phosphatidylserine decarboxylase proenzyme (287 aa).

Active-site charge relay system; for autoendoproteolytic cleavage activity residues include Asp86, His143, and Ser250. Ser250 acts as the Schiff-base intermediate with substrate; via pyruvic acid; for decarboxylase activity in catalysis. Ser250 carries the pyruvic acid (Ser); by autocatalysis modification.

Belongs to the phosphatidylserine decarboxylase family. PSD-B subfamily. Prokaryotic type I sub-subfamily. Heterodimer of a large membrane-associated beta subunit and a small pyruvoyl-containing alpha subunit. Pyruvate serves as cofactor. In terms of processing, is synthesized initially as an inactive proenzyme. Formation of the active enzyme involves a self-maturation process in which the active site pyruvoyl group is generated from an internal serine residue via an autocatalytic post-translational modification. Two non-identical subunits are generated from the proenzyme in this reaction, and the pyruvate is formed at the N-terminus of the alpha chain, which is derived from the carboxyl end of the proenzyme. The autoendoproteolytic cleavage occurs by a canonical serine protease mechanism, in which the side chain hydroxyl group of the serine supplies its oxygen atom to form the C-terminus of the beta chain, while the remainder of the serine residue undergoes an oxidative deamination to produce ammonia and the pyruvoyl prosthetic group on the alpha chain. During this reaction, the Ser that is part of the protease active site of the proenzyme becomes the pyruvoyl prosthetic group, which constitutes an essential element of the active site of the mature decarboxylase.

It is found in the cell membrane. It carries out the reaction a 1,2-diacyl-sn-glycero-3-phospho-L-serine + H(+) = a 1,2-diacyl-sn-glycero-3-phosphoethanolamine + CO2. It participates in phospholipid metabolism; phosphatidylethanolamine biosynthesis; phosphatidylethanolamine from CDP-diacylglycerol: step 2/2. Functionally, catalyzes the formation of phosphatidylethanolamine (PtdEtn) from phosphatidylserine (PtdSer). The sequence is that of Phosphatidylserine decarboxylase proenzyme from Wigglesworthia glossinidia brevipalpis.